A 491-amino-acid polypeptide reads, in one-letter code: UDP-N-acetylmuramate--L-alanine ligase (491 aa).

ATP is bound at residue 126-132; that stretch reads GTHGKTT.

The protein belongs to the MurCDEF family.

Its subcellular location is the cytoplasm. It catalyses the reaction UDP-N-acetyl-alpha-D-muramate + L-alanine + ATP = UDP-N-acetyl-alpha-D-muramoyl-L-alanine + ADP + phosphate + H(+). It participates in cell wall biogenesis; peptidoglycan biosynthesis. Cell wall formation. The protein is UDP-N-acetylmuramate--L-alanine ligase of Klebsiella pneumoniae (strain 342).